The following is a 99-amino-acid chain: UPF0045 protein MTH_1187 (99 aa).

This sequence belongs to the UPF0045 family. Homotetramer.

This is UPF0045 protein MTH_1187 from Methanothermobacter thermautotrophicus (strain ATCC 29096 / DSM 1053 / JCM 10044 / NBRC 100330 / Delta H) (Methanobacterium thermoautotrophicum).